The primary structure comprises 438 residues: MEFKVEKKGTNKAVIEVEVEPEKFEEGLQKSYLKNAKYFKIPGFRPGKAPRSLIERAYGEEVFYDDAIDYVLNETYPKVIEESKLEVVSRPEVDIVQVGKGKSFIYKAEVYIKPEFGLGEYKGVEIKKIEYPVAEEEVEHELEHLREENARFISVDREVQNGDIVTIDFEGFVDGESIENGSAQDYELTIGSGRFIPGFEEQLIGIKKGEEKEIEVVFPEDYQSQELAGKKATFKVKVKEIKVKELPELDDEFAKDVSEYETLEELKASIRNRIKEKNDKRAKDEMIDAILEKIAQATEIDIPEPMIENQINYYVEDVVRNLQYFGMTYEKYLEAIGKTDKEFREQFRERATKAIRNNLILEKIAKVENIQATDEELEKELERLAKMYNLEVEKLKERLSEDDIEYIKEGIILNKAIDFIYENAKIISEETQSESQPE.

A PPIase FKBP-type domain is found at 162 to 247 (GDIVTIDFEG…VKEIKVKELP (86 aa)).

Belongs to the FKBP-type PPIase family. Tig subfamily.

Its subcellular location is the cytoplasm. It catalyses the reaction [protein]-peptidylproline (omega=180) = [protein]-peptidylproline (omega=0). Functionally, involved in protein export. Acts as a chaperone by maintaining the newly synthesized protein in an open conformation. Functions as a peptidyl-prolyl cis-trans isomerase. This is Trigger factor from Caldicellulosiruptor saccharolyticus (strain ATCC 43494 / DSM 8903 / Tp8T 6331).